Reading from the N-terminus, the 498-residue chain is NAD(P)H-quinone oxidoreductase chain 4, chloroplastic (498 aa).

The next 14 helical transmembrane spans lie at 4-24, 37-57, 80-100, 112-129, 134-154, 167-187, 208-228, 242-262, 272-292, 305-325, 330-350, 386-406, 416-436, and 463-483; these read FPWL…IVLF, YCIC…HFEL, FGID…TTLA, KLFY…LGTF, ILLF…LLSM, FILY…GMSL, ALEI…SPII, HYST…YGLV, AHSI…IYAA, IAYS…SISE, GAIL…FLAG, LALP…GIIT, ILIT…SLSI, and FISI…DFIF.

It belongs to the complex I subunit 4 family.

It is found in the plastid. It localises to the chloroplast thylakoid membrane. The catalysed reaction is a plastoquinone + NADH + (n+1) H(+)(in) = a plastoquinol + NAD(+) + n H(+)(out). It carries out the reaction a plastoquinone + NADPH + (n+1) H(+)(in) = a plastoquinol + NADP(+) + n H(+)(out). This Phaseolus vulgaris (Kidney bean) protein is NAD(P)H-quinone oxidoreductase chain 4, chloroplastic.